The following is a 502-amino-acid chain: Xylan O-acetyltransferase 13 (502 aa).

Over 1 to 53 (MWSALFSHLREVHKRSGVKEEKLIMKSPPAAGEAGCHKPQATATNKMTVLQSP) the chain is Cytoplasmic. Residues 54–76 (LGLRTILTSLVAFFIVVSSVSLL) traverse the membrane as a helical; Signal-anchor for type II membrane protein segment. Topologically, residues 77-502 (FDRGQDAQAQ…EFLYAYIMHK (426 aa)) are lumenal. 4 disulfide bridges follow: Cys152-Cys203, Cys174-Cys239, Cys183-Cys483, and Cys399-Cys479. Asn153, Asn163, Asn189, and Asn209 each carry an N-linked (GlcNAc...) asparagine glycan. The short motif at 226-228 (GDS) is the GDS motif element. The Nucleophile role is filled by Ser228. 5 N-linked (GlcNAc...) asparagine glycosylation sites follow: Asn255, Asn267, Asn372, Asn401, and Asn442. Asp478 serves as the catalytic Proton donor. The DXXH motif motif lies at 478 to 481 (DCTH). The Proton acceptor role is filled by His481.

The protein belongs to the PC-esterase family. TBL subfamily.

The protein resides in the golgi apparatus membrane. Xylan acetyltransferase required for 2-O- and 3-O-monoacetylation of xylosyl residues in xylan. Catalyzes the 2-O-acetylation of xylan, followed by nonenzymatic acetyl migration to the O-3 position, resulting in products that are monoacetylated at both O-2 and O-3 positions. This Oryza sativa subsp. japonica (Rice) protein is Xylan O-acetyltransferase 13.